Here is a 444-residue protein sequence, read N- to C-terminus: Mitogen-activated protein kinase mpk-1 (444 aa).

2 stretches are compositionally biased toward polar residues: residues 1 to 17 (MPTWIPNNLCAQPTTRN) and 24 to 56 (GHPQATQQQSAPGSLAYRNSSNIPNGATNHVRQ). The tract at residues 1 to 56 (MPTWIPNNLCAQPTTRNAKPPSNGHPQATQQQSAPGSLAYRNSSNIPNGATNHVRQ) is disordered. In terms of domain architecture, Protein kinase spans 96–384 (YVNLSYIGEG…IEQALAHPYL (289 aa)). ATP is bound by residues 102 to 110 (IGEGAYGMV) and K125. D220 serves as the catalytic Proton acceptor. The residue at position 256 (T256) is a Phosphothreonine. The TXY motif lies at 256-258 (TEY). Y258 carries the post-translational modification Phosphotyrosine.

Belongs to the protein kinase superfamily. CMGC Ser/Thr protein kinase family. MAP kinase subfamily. Isoform a interacts with gck-1 (via N-terminus). Mg(2+) serves as cofactor. Isoform a is phosphorylated at the pachytene stage during oogenesis and is negatively regulated by gck-1. Isoform b is phosphorylated in proximal oocytes. In terms of tissue distribution, expressed in cells lining the rectum. Isoform a is expressed in nervous system, body wall muscles and posterior intestine. Isoform b expression may be restricted to germline.

It catalyses the reaction L-seryl-[protein] + ATP = O-phospho-L-seryl-[protein] + ADP + H(+). The enzyme catalyses L-threonyl-[protein] + ATP = O-phospho-L-threonyl-[protein] + ADP + H(+). With respect to regulation, activated by dual phosphorylation at Thr-256 and Tyr-258. May be inactivated by lip-1-mediated dephosphorylation. Functionally, functions in let-60 Ras signaling pathway; acts downstream of lin-45 raf kinase, but before the lin-1 gene product in controlling vulval cell differentiation. Plays a negative role in proximal germline proliferation in the mitotic zone. Required for progression of developing oocytes through the pachytene stage, perhaps acting after efl-1/dpl-1-mediated gene activation and before gld-1 down-regulation. May play a role in global X chromosome reactivation or be indirectly required for progression of germ cells through meiosis to the point where X reactivation occurs. In oocytes, inhibits the activity of the chloride channel clh-3, likely by activating gck-3. Plays a role in response to M.nematophilum-mediated bacterial infection by promoting tail swelling and preventing constipation. Involved in fluid homeostasis. In addition, involved in the up-regulation of lysozyme ilys-3 expression in the intestine in responses to M.nematophilum-mediated bacterial infection. By phosphorylating transcription factor skn-1 (isoform c) may play a role in increasing life span downstream of lin-45, let-60 and mek-2. By up-regulating cep-1 and down-regulating gld-1 expression in the late pachytene stage, plays a role in germline apoptosis in response to DNA damage. Regulates egl-1 expression in response to DNA damage, probably upstream of cep-1. Its function is as follows. Suppresses germline tumor formation by preventing the dedifferentiation of secondary spermatocytes probably upstream of rskn-1. This chain is Mitogen-activated protein kinase mpk-1 (mpk-1), found in Caenorhabditis elegans.